We begin with the raw amino-acid sequence, 485 residues long: MEYKLLVGLEVHVQLGLKTKAFCGCKNDFGGIPNSRTCPTCLGLPGALPSINKELISSAILAGHATNSKIKNIIKFDRKHYAYPDLPKGYQISQNDAPICENGFIFIETCSGLKKINIIRIHMEEDSGKSLHLLESENRSYIDFNRSGAPLLEIVSNPDINNGEEAVAYLSALREIFRYLDLSDCNMENGSFRCDVNVNLLINENGVEYKTPISEIKNLNSFKSVKLAIDYEKSRQKEEWILHRRTFESVGKHTMGFDDKKGITVLQRSKETVADYRYIKDPDLPLIKLDDSYIESIKSNRMVELPFDTRVRLKEQYGLSDFDVVTLTADKNLVKYFEEAAIASSDPKRVANWILSEVLSVLNDREMNILDFNLPPSYISELVEFIVNDRVSGKIAKEIFLEMLERNVSSAIIINEKNLAQISDISFIESVVFEVLNENPKSIELYKKGKSHAIKFMMGQIMRKTSGRVNPVLANEILMNKLRDV.

The protein belongs to the GatB/GatE family. GatB subfamily. As to quaternary structure, heterotrimer of A, B and C subunits.

The catalysed reaction is L-glutamyl-tRNA(Gln) + L-glutamine + ATP + H2O = L-glutaminyl-tRNA(Gln) + L-glutamate + ADP + phosphate + H(+). It carries out the reaction L-aspartyl-tRNA(Asn) + L-glutamine + ATP + H2O = L-asparaginyl-tRNA(Asn) + L-glutamate + ADP + phosphate + 2 H(+). Functionally, allows the formation of correctly charged Asn-tRNA(Asn) or Gln-tRNA(Gln) through the transamidation of misacylated Asp-tRNA(Asn) or Glu-tRNA(Gln) in organisms which lack either or both of asparaginyl-tRNA or glutaminyl-tRNA synthetases. The reaction takes place in the presence of glutamine and ATP through an activated phospho-Asp-tRNA(Asn) or phospho-Glu-tRNA(Gln). The sequence is that of Aspartyl/glutamyl-tRNA(Asn/Gln) amidotransferase subunit B from Borrelia turicatae (strain 91E135).